A 291-amino-acid chain; its full sequence is Methionine aminopeptidase (291 aa).

Residue histidine 118 coordinates substrate. Residues aspartate 135, aspartate 146, and histidine 209 each coordinate a divalent metal cation. Residue histidine 216 participates in substrate binding. A divalent metal cation contacts are provided by glutamate 241 and glutamate 273.

This sequence belongs to the peptidase M24A family. Methionine aminopeptidase type 1 subfamily. Monomer. Requires Co(2+) as cofactor. It depends on Zn(2+) as a cofactor. Mn(2+) serves as cofactor. The cofactor is Fe(2+).

The enzyme catalyses Release of N-terminal amino acids, preferentially methionine, from peptides and arylamides.. Functionally, removes the N-terminal methionine from nascent proteins. The N-terminal methionine is often cleaved when the second residue in the primary sequence is small and uncharged (Met-Ala-, Cys, Gly, Pro, Ser, Thr, or Val). Requires deformylation of the N(alpha)-formylated initiator methionine before it can be hydrolyzed. In Chlamydia muridarum (strain MoPn / Nigg), this protein is Methionine aminopeptidase.